We begin with the raw amino-acid sequence, 221 residues long: Deoxyribose-phosphate aldolase (221 aa).

Asp96 serves as the catalytic Proton donor/acceptor. The active-site Schiff-base intermediate with acetaldehyde is Lys157. Lys185 (proton donor/acceptor) is an active-site residue.

This sequence belongs to the DeoC/FbaB aldolase family. DeoC type 1 subfamily.

It is found in the cytoplasm. It carries out the reaction 2-deoxy-D-ribose 5-phosphate = D-glyceraldehyde 3-phosphate + acetaldehyde. It participates in carbohydrate degradation; 2-deoxy-D-ribose 1-phosphate degradation; D-glyceraldehyde 3-phosphate and acetaldehyde from 2-deoxy-alpha-D-ribose 1-phosphate: step 2/2. Catalyzes a reversible aldol reaction between acetaldehyde and D-glyceraldehyde 3-phosphate to generate 2-deoxy-D-ribose 5-phosphate. The polypeptide is Deoxyribose-phosphate aldolase (Crocosphaera subtropica (strain ATCC 51142 / BH68) (Cyanothece sp. (strain ATCC 51142))).